A 433-amino-acid chain; its full sequence is GTPase Obg (433 aa).

The 159-residue stretch at 1–159 (MKFVDSADLI…FEIRAELKVL (159 aa)) folds into the Obg domain. One can recognise an OBG-type G domain in the interval 160–332 (ADVGFVGLPN…LLFMIYEELK (173 aa)). GTP is bound by residues 166–173 (GLPNAGKS), 191–195 (FTTIN), 213–216 (DLPG), 284–287 (NKMD), and 313–315 (SGL). Mg(2+) contacts are provided by Ser-173 and Thr-193. Residues 355–433 (KFEEQKEDIQ…VFDYELEWTD (79 aa)) form the OCT domain.

It belongs to the TRAFAC class OBG-HflX-like GTPase superfamily. OBG GTPase family. As to quaternary structure, monomer. Requires Mg(2+) as cofactor.

The protein localises to the cytoplasm. Its function is as follows. An essential GTPase which binds GTP, GDP and possibly (p)ppGpp with moderate affinity, with high nucleotide exchange rates and a fairly low GTP hydrolysis rate. Plays a role in control of the cell cycle, stress response, ribosome biogenesis and in those bacteria that undergo differentiation, in morphogenesis control. The chain is GTPase Obg from Mycoplasma capricolum subsp. capricolum (strain California kid / ATCC 27343 / NCTC 10154).